Here is a 338-residue protein sequence, read N- to C-terminus: Deoxyhypusine hydroxylase (338 aa).

HEAT-like PBS-type repeat units follow at residues 71 to 97 (LKHELAYCLGQTRNPDAVAFLQQVLKD), 104 to 130 (CRHEAAEALGALGYEDSLEILKALKDD), 200 to 233 (QRYRAMFALRDLASPPDLPTAVQAVDALAKGLKD), 238 to 264 (FRHEVAFVFGQLCHPASVPSLTECLSN), and 271 to 298 (VRHEAAEALGSLGDVEGVEDTLKKFLND). The Fe cation site is built by His-73, Glu-74, His-106, and Glu-107. Fe cation-binding residues include His-240, Glu-241, His-273, and Glu-274.

The protein belongs to the deoxyhypusine hydroxylase family. Fe(2+) is required as a cofactor.

It is found in the cytoplasm. The protein localises to the nucleus. It carries out the reaction [eIF5A protein]-deoxyhypusine + AH2 + O2 = [eIF5A protein]-hypusine + A + H2O. The protein operates within protein modification; eIF5A hypusination. Functionally, catalyzes the hydroxylation of the N(6)-(4-aminobutyl)-L-lysine intermediate to form hypusine, an essential post-translational modification only found in mature eIF-5A factor. The polypeptide is Deoxyhypusine hydroxylase (lia1) (Aspergillus niger (strain ATCC MYA-4892 / CBS 513.88 / FGSC A1513)).